A 1148-amino-acid chain; its full sequence is Phospholipid-transporting ATPase IB (1148 aa).

The Cytoplasmic portion of the chain corresponds to 1–54; that stretch reads MSRATSVGDQLDVPARTIYLNQPHLNKFCDNQISTAKYSVVTFLPRFLYEQIRR. T5 is modified (phosphothreonine). Residues 55 to 75 form a helical membrane-spanning segment; it reads AANAFFLFIALLQQIPDVSPT. The Exoplasmic loop segment spans residues 76 to 79; the sequence is GRYT. Residues 80-100 form a helical membrane-spanning segment; that stretch reads TLVPLIIILTIAGIKEIVEDF. Over 101–276 the chain is Cytoplasmic; sequence KRHKADNAVN…SNVEKVTNVQ (176 aa). Residues 277 to 297 traverse the membrane as a helical segment; the sequence is ILVLFGILLVMALVSSVGALY. Over 298–324 the chain is Exoplasmic loop; the sequence is WNGSQGGKNWYIKKMDATSDNFGYNLL. The chain crosses the membrane as a helical span at residues 325–345; it reads TFIILYNNLIPISLLVTLEVV. Over 346–847 the chain is Cytoplasmic; it reads KYTQALFINW…CILYCFYKNV (502 aa). Catalysis depends on D388, which acts as the 4-aspartylphosphate intermediate. Residues D388, K389, T390, E488, F529, K552, R585, T665, G666, D667, R755, and K761 each coordinate ATP. A Mg(2+)-binding site is contributed by D388. Position 390 (T390) interacts with Mg(2+). D781 contacts Mg(2+). Residues N784 and D785 each contribute to the ATP site. Position 785 (D785) interacts with Mg(2+). The helical transmembrane segment at 848 to 868 threads the bilayer; that stretch reads VLYIIELWFAFVNGFSGQILF. Topologically, residues 869-870 are exoplasmic loop; the sequence is ER. A helical membrane pass occupies residues 871–891; that stretch reads WCIGLYNVIFTALPPFTLGIF. Residues 892–919 are Cytoplasmic-facing; it reads ERSCSQESMLRFPQLYKITQNAEGFNTK. The helical transmembrane segment at 920-940 threads the bilayer; the sequence is VFWGHCINALVHSLILFWFPM. The Exoplasmic loop segment spans residues 941 to 957; sequence KALEHDTVLANGHATDY. A helical membrane pass occupies residues 958 to 978; sequence LFVGNIVYTYVVVTVCLKAGL. Residues 979–988 are Cytoplasmic-facing; sequence ETTAWTKFSH. A helical membrane pass occupies residues 989–1009; it reads LAVWGSMLIWLVFFGIYSTIW. At 1010–1023 the chain is on the exoplasmic loop side; the sequence is PTIPIAPDMKGQAT. A helical transmembrane segment spans residues 1024 to 1044; that stretch reads MVLSSAHFWLGLFLVPTACLI. Over 1045–1148 the chain is Cytoplasmic; it reads EDVAWRAAKH…DTTKQKSRKK (104 aa). Positions 1102 to 1126 are disordered; sequence PPTLFRGSSLQQSMPHGYAFSQEEH.

It belongs to the cation transport ATPase (P-type) (TC 3.A.3) family. Type IV subfamily. In terms of assembly, component of a P4-ATPase flippase complex which consists of a catalytic alpha subunit and an accessory beta subunit. Interacts with TMEM30A to form a flippase complex. Requires Mg(2+) as cofactor. In terms of tissue distribution, expressed in retinal photoreceptor cells and testis.

It is found in the membrane. It localises to the golgi apparatus membrane. Its subcellular location is the endosome membrane. The protein localises to the cell membrane. The protein resides in the photoreceptor outer segment membrane. It is found in the photoreceptor inner segment membrane. It catalyses the reaction ATP + H2O + phospholipidSide 1 = ADP + phosphate + phospholipidSide 2.. The catalysed reaction is a 1,2-diacyl-sn-glycero-3-phospho-L-serine(out) + ATP + H2O = a 1,2-diacyl-sn-glycero-3-phospho-L-serine(in) + ADP + phosphate + H(+). The enzyme catalyses a 1,2-diacyl-sn-glycero-3-phosphoethanolamine(in) + ATP + H2O = a 1,2-diacyl-sn-glycero-3-phosphoethanolamine(out) + ADP + phosphate + H(+). Its activity is regulated as follows. ATPase activity is stimulated by phosphatidylserine (PS) and minimally by phosphatidylethanolamine (PE). ATPase activity is inhibited by N-ethylmaleimide (NEM) and vanadate. Flippase activity is inhibited by NEM and 1,2-dioleoyl-sn-glycero-3-phospho-L-serine (DOPS). In terms of biological role, catalytic component of a P4-ATPase flippase complex which catalyzes the hydrolysis of ATP coupled to the transport of aminophospholipids from the outer to the inner leaflet of various membranes and ensures the maintenance of asymmetric distribution of phospholipids. Able to translocate phosphatidylserine, but not phosphatidylcholine. Phospholipid translocation seems also to be implicated in vesicle formation and in uptake of lipid signaling molecules. Reconstituted to liposomes, the ATP8A2:TMEM30A flippase complex predominantly transports phosphatidylserine (PS) and to a lesser extent phosphatidylethanolamine (PE). Phospholipid translocation is not associated with a countertransport of an inorganic ion or other charged substrate from the cytoplasmic side toward the exoplasm in connection with the phosphorylation from ATP. ATP8A2:TMEM30A may be involved in regulation of neurite outgrowth. Proposed to function in the generation and maintenance of phospholipid asymmetry in photoreceptor disk membranes and neuronal axon membranes. May be involved in vesicle trafficking in neuronal cells. Required for normal visual and auditory function; involved in photoreceptor and inner ear spiral ganglion cell survival. The protein is Phospholipid-transporting ATPase IB of Bos taurus (Bovine).